The sequence spans 141 residues: Large ribosomal subunit protein uL16 (141 aa).

The disordered stretch occupies residues 1–20; sequence MLMPKRTKYRKQQKGRNRGK.

Belongs to the universal ribosomal protein uL16 family. In terms of assembly, part of the 50S ribosomal subunit.

Functionally, binds 23S rRNA and is also seen to make contacts with the A and possibly P site tRNAs. In Nautilia profundicola (strain ATCC BAA-1463 / DSM 18972 / AmH), this protein is Large ribosomal subunit protein uL16.